Reading from the N-terminus, the 60-residue chain is Cytotoxin 2 (60 aa).

Cystine bridges form between cysteine 3/cysteine 21, cysteine 14/cysteine 38, cysteine 42/cysteine 53, and cysteine 54/cysteine 59.

Belongs to the three-finger toxin family. Short-chain subfamily. Type IA cytotoxin sub-subfamily. As to quaternary structure, monomer in solution; Homodimer and oligomer in the presence of negatively charged lipids forming a pore with a size ranging between 20 and 30 Angstroms. In terms of tissue distribution, expressed by the venom gland.

Its subcellular location is the secreted. The protein resides in the target cell membrane. Functionally, this three-finger cytotoxin is a basic protein that interacts and penetrates into the cell membrane, with the tips of all the three loops. Cytotoxins which have a Pro-30 (P-type) interacts with membrane stronger that those which have a 'Ser-28' (S-type). CTII interacts with membrane stronger than CTI. The polypeptide is Cytotoxin 2 (Naja oxiana (Central Asian cobra)).